We begin with the raw amino-acid sequence, 373 residues long: 3-isopropylmalate dehydrogenase gloI (373 aa).

Substrate-binding residues include S92, R98, and R108. D228, D253, and D257 together coordinate Mg(2+). Residues 294-300 and N307 each bind NADP(+); that span reads HGSAPDI.

It belongs to the isocitrate and isopropylmalate dehydrogenases family. In terms of assembly, homodimer. Requires Mg(2+) as cofactor. The cofactor is Mn(2+).

The enzyme catalyses (2R,3S)-3-isopropylmalate + NAD(+) = 4-methyl-2-oxopentanoate + CO2 + NADH. It participates in mycotoxin biosynthesis. 3-isopropylmalate dehydrogenase; part of the gene cluster that mediates the biosynthesis of pneumocandins, lipohexapeptides of the echinocandin family that prevent fungal cell wall formation by non-competitive inhibition of beta-1,3-glucan synthase. The 10,12-dimethylmyristoyl side chain is synthesized by the reducing polyketide synthase gloL/GLPKS4. The thioesterase gloN/GLHYD exclusively interacts with gloL/GLPKS4 to maintain turnover of the polyketide side chain. The 10R,12S-dimethylmyristic acid is then transferred to the first thiolation domain of the nonribosomal peptide synthetase gloA/GLNRPS4 by the acyl-AMP ligase gloD/GLligase, followed by its acylation to L-ornithine to trigger elongation of the cyclic hexapeptide. L-ornithine, 4R-hydroxyl-L-proline (generated from L-proline by the dioxygenase gloF/GLOXY2), 3S-hydroxyl-L-homotyrosine (generated by gloG/GLHtyB, gloH/GLHtyA, gloI/GLHtyC, gloJ/GLHtyD and hydroxylated at C-3 by the dioxygenase gloM/GLOXY1), 3R-hydroxyl-L-glutamine (generated from L-glutamine probably by the dioxygenase gloE/GLOXY3) and 3S-hydroxyl-L-proline (generated from L-proline by the dioxygenase gloF/GLOXY2 to yield pneumocandin B0), or 3S-hydroxyl-4S-methyl-L-proline (generated from L-leucine by the dioxygenase gloC/GLOXY4 to yield pneumocandin A0) are sequentially added to the growing chain. The last C domain of gloA/GLNRPS4 is proposed to be responsible for cyclization by condensation to form the peptide bond between L-ornithine and 3S-hydroxyl-4S-methyl-L-proline (for pneumocandin A0) or 3S-hydroxyl-L-proline (for pneumocandin B0). Finally, the subsequent C-4 hydroxylation of 3S-hydroxyl-L-homotyrosine and L-ornithine dihydroxylation at C-4 and C-5 are performed by the cytochrome P450 monooxygenases gloP/GLP450-1 and gloO/GLP450-2, respectively. The sequence is that of 3-isopropylmalate dehydrogenase gloI from Glarea lozoyensis (strain ATCC 20868 / MF5171).